Consider the following 388-residue polypeptide: Pre-mRNA-splicing factor cwf2 (388 aa).

Positions 43 to 63 (VKRKKQPARKQIETRPEYEME) are disordered. Residues 111-138 (NPGSFFCLYFARGMCSEGSKCEYLHRLP) form a C3H1-type zinc finger. Residues 174–248 (YTLYVGGITP…ECLNVRWATT (75 aa)) enclose the RRM domain. Residues 331–352 (PNKSQSEEGSNDDHKSVTTTES) are disordered.

The protein belongs to the RRM CWC2 family. In terms of assembly, belongs to the 40S cdc5-associated complex (or cwf complex), a spliceosome sub-complex reminiscent of a late-stage spliceosome composed of the U2, U5 and U6 snRNAs and at least brr2, cdc5, cwf2/prp3, cwf3/syf1, cwf4/syf3, cwf5/ecm2, spp42/cwf6, cwf7/spf27, cwf8, cwf9, cwf10, cwf11, cwf12, prp45/cwf13, cwf14, cwf15, cwf16, cwf17, cwf18, cwf19, cwf20, cwf21, cwf22, cwf23, cwf24, cwf25, cwf26, cyp7/cwf27, cwf28, cwf29/ist3, lea1, msl1, prp5/cwf1, prp10, prp12/sap130, prp17, prp22, sap61, sap62, sap114, sap145, slu7, smb1, smd1, smd3, smf1, smg1 and syf2.

It localises to the nucleus. Involved in the first step of pre-mRNA splicing. Required for cell growth and cell cycle control. Plays a role in the levels of the U1, U4, U5 and U6 snRNAs and the maintenance of the U4/U6 snRNA complex. May provide the link between the 'nineteen complex' NTC spliceosome protein complex and the spliceosome through the U6 snRNA. Associates predominantly with U6 snRNAs in assembled active spliceosomes. Binds directly to the internal stem-loop (ISL) domain of the U6 snRNA and to the pre-mRNA intron near the 5' splice site during the activation and catalytic phases of the spliceosome cycle. Involved in pre-mRNA splicing. The sequence is that of Pre-mRNA-splicing factor cwf2 (cwf2) from Schizosaccharomyces pombe (strain 972 / ATCC 24843) (Fission yeast).